We begin with the raw amino-acid sequence, 86 residues long: BaSO(4)-adsorbing protein 1 (86 aa).

Disulfide bonds link cysteine 6-cysteine 22, cysteine 18-cysteine 49, and cysteine 39-cysteine 54. The disordered stretch occupies residues 58–86 (GDSASNTQNQGGSRRQENEDQGDDEWDRK). Over residues 59-70 (DSASNTQNQGGS) the composition is skewed to polar residues. Acidic residues predominate over residues 76–86 (EDQGDDEWDRK).

Salivary gland (at protein level).

The protein localises to the secreted. In terms of biological role, inhibits lectin and classical pathways of complement system activation in the host with no significant effect on the alternative pathway. Inhibits host extrinsic blood coagulation pathway but not the intrinsic cascade. Binds to neutral and negatively charged membranes in vitro; binding is reduced upon pre-incubation with Ca(2+). In Ornithodoros savignyi (African eyed tampan), this protein is BaSO(4)-adsorbing protein 1.